Reading from the N-terminus, the 220-residue chain is ATP synthase subunit beta, chloroplastic (220 aa).

The protein belongs to the ATPase alpha/beta chains family. F-type ATPases have 2 components, CF(1) - the catalytic core - and CF(0) - the membrane proton channel. CF(1) has five subunits: alpha(3), beta(3), gamma(1), delta(1), epsilon(1). CF(0) has four main subunits: a(1), b(1), b'(1) and c(9-12).

Its subcellular location is the plastid. The protein localises to the chloroplast thylakoid membrane. The catalysed reaction is ATP + H2O + 4 H(+)(in) = ADP + phosphate + 5 H(+)(out). Produces ATP from ADP in the presence of a proton gradient across the membrane. The catalytic sites are hosted primarily by the beta subunits. The polypeptide is ATP synthase subunit beta, chloroplastic (atpB) (Osmundastrum cinnamomeum (Cinnamon fern)).